Consider the following 102-residue polypeptide: Small ribosomal subunit protein uS10 (102 aa).

The protein belongs to the universal ribosomal protein uS10 family. In terms of assembly, part of the 30S ribosomal subunit.

Its function is as follows. Involved in the binding of tRNA to the ribosomes. This Methylocella silvestris (strain DSM 15510 / CIP 108128 / LMG 27833 / NCIMB 13906 / BL2) protein is Small ribosomal subunit protein uS10.